The chain runs to 318 residues: Acetyl-coenzyme A carboxylase carboxyl transferase subunit alpha (318 aa).

Positions Arg39–Lys297 constitute a CoA carboxyltransferase C-terminal domain.

The protein belongs to the AccA family. In terms of assembly, acetyl-CoA carboxylase is a heterohexamer composed of biotin carboxyl carrier protein (AccB), biotin carboxylase (AccC) and two subunits each of ACCase subunit alpha (AccA) and ACCase subunit beta (AccD).

The protein resides in the cytoplasm. The enzyme catalyses N(6)-carboxybiotinyl-L-lysyl-[protein] + acetyl-CoA = N(6)-biotinyl-L-lysyl-[protein] + malonyl-CoA. The protein operates within lipid metabolism; malonyl-CoA biosynthesis; malonyl-CoA from acetyl-CoA: step 1/1. Functionally, component of the acetyl coenzyme A carboxylase (ACC) complex. First, biotin carboxylase catalyzes the carboxylation of biotin on its carrier protein (BCCP) and then the CO(2) group is transferred by the carboxyltransferase to acetyl-CoA to form malonyl-CoA. In Bartonella tribocorum (strain CIP 105476 / IBS 506), this protein is Acetyl-coenzyme A carboxylase carboxyl transferase subunit alpha.